The primary structure comprises 745 residues: Aminopeptidase NAALADL1 (745 aa).

Residues 1 to 6 (MHWVKI) lie on the Cytoplasmic side of the membrane. The chain crosses the membrane as a helical; Signal-anchor for type II membrane protein span at residues 7–28 (LGVALGAAALLGLGIILGHFAI). Residues 29 to 745 (PKATSPLTSS…AATLVPVADL (717 aa)) are Extracellular-facing. Residues Asn-128, Asn-141, and Asn-235 are each glycosylated (N-linked (GlcNAc...) asparagine). Positions 263 and 266 each coordinate Ca(2+). N-linked (GlcNAc...) asparagine glycans are attached at residues Asn-279, Asn-302, and Asn-329. Cys-301 and Cys-318 form a disulfide bridge. 2 residues coordinate Zn(2+): His-373 and Asp-383. Glu-421 functions as the Proton donor/acceptor in the catalytic mechanism. Residue Glu-422 coordinates Zn(2+). Ca(2+)-binding residues include Glu-430 and Glu-433. Residue Asp-450 participates in Zn(2+) binding. Asn-456 and Asn-497 each carry an N-linked (GlcNAc...) asparagine glycan. His-550 lines the Zn(2+) pocket. N-linked (GlcNAc...) asparagine glycosylation is found at Asn-593 and Asn-620.

Belongs to the peptidase M28 family. M28B subfamily. As to quaternary structure, homodimer. Zn(2+) is required as a cofactor. In terms of processing, N-glycosylated.

Its subcellular location is the apical cell membrane. In terms of biological role, aminopeptidase with broad substrate specificity. Has lower activity with substrates that have Asp or Glu in the P2' position, or Pro in the P3' position. Lacks activity with substrates that have both Pro in the P3' position and Asp or Glu in the P2' position. Lacks carboxypeptidase activity. Lacks dipeptidyl-peptidase IV type activity. This Mus musculus (Mouse) protein is Aminopeptidase NAALADL1 (Naaladl1).